Reading from the N-terminus, the 466-residue chain is Transcription factor SOX-10 (466 aa).

Disordered stretches follow at residues Met1–Lys67, Leu160–Gly198, Asp213–Asn275, Gln355–Thr375, and Arg433–Pro466. Positions Leu23 to Gly32 are enriched in low complexity. Position 24 is a phosphoserine (Ser24). The dimerization (DIM) stretch occupies residues Glu62–Pro102. The segment at residues Val104–Lys172 is a DNA-binding region (HMG box). Composition is skewed to basic and acidic residues over residues Leu160 to Tyr173 and Ala254 to Ile271. Residues Pro228–Val310 are transactivation domain (TAM). Positions Lys353–Pro466 are transactivation domain (TAC). The segment covering Ser440–Pro466 has biased composition (polar residues).

Monomer. Interacts with Armcx3 at the mitochondrial outer membrane surface. Interacts with PAX3. Predominant expression in glial cells of the nervous system.

The protein localises to the cytoplasm. It localises to the nucleus. The protein resides in the mitochondrion outer membrane. In terms of biological role, transcription factor that plays a central role in developing and mature glia. Specifically activates expression of myelin genes, during oligodendrocyte (OL) maturation, such as DUSP15 and MYRF, thereby playing a central role in oligodendrocyte maturation and CNS myelination. Once induced, MYRF cooperates with SOX10 to implement the myelination program. Transcriptional activator of MITF, acting synergistically with PAX3. Transcriptional activator of MBP, via binding to the gene promoter. The protein is Transcription factor SOX-10 (Sox10) of Rattus norvegicus (Rat).